A 352-amino-acid polypeptide reads, in one-letter code: Cell division protein ZipA (352 aa).

Residues 1-5 (MQELR) lie on the Periplasmic side of the membrane. Residues 6 to 26 (LVLIIVGALAISALLLHGLWT) form a helical membrane-spanning segment. Over 27 to 352 (SRKEKPAKFG…REKAKLYSQA (326 aa)) the chain is Cytoplasmic. Positions 35-54 (FGEKPLGKLDDSNRDTEGFD) are enriched in basic and acidic residues. The tract at residues 35-56 (FGEKPLGKLDDSNRDTEGFDHT) is disordered.

This sequence belongs to the ZipA family. Interacts with FtsZ via their C-terminal domains.

Its subcellular location is the cell inner membrane. Essential cell division protein that stabilizes the FtsZ protofilaments by cross-linking them and that serves as a cytoplasmic membrane anchor for the Z ring. Also required for the recruitment to the septal ring of downstream cell division proteins. This chain is Cell division protein ZipA, found in Photobacterium profundum (strain SS9).